Consider the following 498-residue polypeptide: ATP synthase subunit beta, chloroplastic (498 aa).

Residue 172–179 (GGAGVGKT) participates in ATP binding.

This sequence belongs to the ATPase alpha/beta chains family. F-type ATPases have 2 components, CF(1) - the catalytic core - and CF(0) - the membrane proton channel. CF(1) has five subunits: alpha(3), beta(3), gamma(1), delta(1), epsilon(1). CF(0) has four main subunits: a(1), b(1), b'(1) and c(9-12).

It localises to the plastid. Its subcellular location is the chloroplast thylakoid membrane. It carries out the reaction ATP + H2O + 4 H(+)(in) = ADP + phosphate + 5 H(+)(out). Functionally, produces ATP from ADP in the presence of a proton gradient across the membrane. The catalytic sites are hosted primarily by the beta subunits. In Galbulimima belgraveana (Northern pigeonberry ash), this protein is ATP synthase subunit beta, chloroplastic.